A 224-amino-acid polypeptide reads, in one-letter code: Cytochrome c biogenesis ATP-binding export protein CcmA (224 aa).

The 220-residue stretch at 1-220 (MQNAEAAPAL…EYAHAEVVGA (220 aa)) folds into the ABC transporter domain. 40 to 47 (GANGSGKT) contacts ATP.

It belongs to the ABC transporter superfamily. CcmA exporter (TC 3.A.1.107) family. As to quaternary structure, the complex is composed of two ATP-binding proteins (CcmA) and two transmembrane proteins (CcmB).

It localises to the cell inner membrane. It carries out the reaction heme b(in) + ATP + H2O = heme b(out) + ADP + phosphate + H(+). Functionally, part of the ABC transporter complex CcmAB involved in the biogenesis of c-type cytochromes; once thought to export heme, this seems not to be the case, but its exact role is uncertain. Responsible for energy coupling to the transport system. The polypeptide is Cytochrome c biogenesis ATP-binding export protein CcmA (Bordetella bronchiseptica (strain ATCC BAA-588 / NCTC 13252 / RB50) (Alcaligenes bronchisepticus)).